The sequence spans 108 residues: MAPRTSLALFVSLNLLFFTCTSATTGTCPIQISTCANVLNLVDLTLGNPPVKPCCSLIQGLADLEAAACLCTALKASILGIVNINLPINLSVLLNVCSRNAPKGFQCA.

Residues 1–23 form the signal peptide; sequence MAPRTSLALFVSLNLLFFTCTSA. 3 disulfides stabilise this stretch: Cys-28–Cys-55, Cys-35–Cys-54, and Cys-71–Cys-107.

Belongs to the plant LTP family. PEARLI1 subfamily.

It is found in the secreted. The sequence is that of Putative lipid-binding protein AIR1B (AIR1B) from Arabidopsis thaliana (Mouse-ear cress).